We begin with the raw amino-acid sequence, 564 residues long: Glutamyl-tRNA(Gln) amidotransferase subunit B, mitochondrial (564 aa).

A mitochondrion-targeting transit peptide spans 1-88 (MIRQCVSHRG…DTDAKLFSRA (88 aa)). The segment at 26 to 63 (PFHHPSPRPLGRKNWSTSDEAKSKRAAMRKGGAPPPEH) is disordered.

The protein belongs to the GatB/GatE family. GatB subfamily. As to quaternary structure, subunit of the heterotrimeric GatCAB amidotransferase (AdT) complex, composed of A, B and C subunits.

The protein localises to the mitochondrion. The catalysed reaction is L-glutamyl-tRNA(Gln) + L-glutamine + ATP + H2O = L-glutaminyl-tRNA(Gln) + L-glutamate + ADP + phosphate + H(+). Functionally, allows the formation of correctly charged Gln-tRNA(Gln) through the transamidation of misacylated Glu-tRNA(Gln) in the mitochondria. The reaction takes place in the presence of glutamine and ATP through an activated gamma-phospho-Glu-tRNA(Gln). The polypeptide is Glutamyl-tRNA(Gln) amidotransferase subunit B, mitochondrial (Ajellomyces capsulatus (strain G186AR / H82 / ATCC MYA-2454 / RMSCC 2432) (Darling's disease fungus)).